Reading from the N-terminus, the 377-residue chain is 6-oxocyclohex-1-ene-1-carbonyl-CoA hydrolase (377 aa).

Belongs to the enoyl-CoA hydratase/isomerase family. As to quaternary structure, homotetramer.

It catalyses the reaction 6-oxocyclohex-1-ene-1-carbonyl-CoA + 2 H2O = 3-hydroxy-6-carboxyhexanoyl-CoA + H(+). It functions in the pathway aromatic compound metabolism; benzoyl-CoA degradation. Its function is as follows. Involved in the central benzoyl-CoA catabolism. Catalyzes the addition of one molecule of water to the double bond and the hydrolytic cleavage of C-C bond in the alicyclic ring, 6-oxocyclohex-1-ene-1-carbonyl-CoA (6-OCH-CoA) to yield 3-hydroxypimelyl-CoA. The polypeptide is 6-oxocyclohex-1-ene-1-carbonyl-CoA hydrolase (oah) (Thauera aromatica).